The sequence spans 431 residues: Tryptophan--tRNA ligase (431 aa).

ATP is bound by residues 12–14 (TPS) and 20–21 (GN). A 'HIGH' region motif is present at residues 13 to 21 (PSGTPHLGN). Residue D145 coordinates L-tryptophan. ATP contacts are provided by residues 157 to 159 (GRD), L197, and 204 to 208 (KMSKS). The short motif at 204-208 (KMSKS) is the 'KMSKS' region element.

The protein belongs to the class-I aminoacyl-tRNA synthetase family. As to quaternary structure, homodimer.

The protein resides in the cytoplasm. The catalysed reaction is tRNA(Trp) + L-tryptophan + ATP = L-tryptophyl-tRNA(Trp) + AMP + diphosphate + H(+). Functionally, catalyzes the attachment of tryptophan to tRNA(Trp). The chain is Tryptophan--tRNA ligase from Xanthomonas campestris pv. campestris (strain ATCC 33913 / DSM 3586 / NCPPB 528 / LMG 568 / P 25).